The primary structure comprises 638 residues: MVVRSIIVSPPTTITYYHPMSIGLLVHPLSPHIPPASSPSASTAGNHHQRIFSLAETCSDMSQLKQLHAFTLRTTYPEEPATLFLYGKILQLSSSFSDVNYAFRVFDSIENHSSFMWNTLIRACAHDVSRKEEAFMLYRKMLERGESSPDKHTFPFVLKACAYIFGFSEGKQVHCQIVKHGFGGDVYVNNGLIHLYGSCGCLDLARKVFDEMPERSLVSWNSMIDALVRFGEYDSALQLFREMQRSFEPDGYTMQSVLSACAGLGSLSLGTWAHAFLLRKCDVDVAMDVLVKNSLIEMYCKCGSLRMAEQVFQGMQKRDLASWNAMILGFATHGRAEEAMNFFDRMVDKRENVRPNSVTFVGLLIACNHRGFVNKGRQYFDMMVRDYCIEPALEHYGCIVDLIARAGYITEAIDMVMSMPMKPDAVIWRSLLDACCKKGASVELSEEIARNIIGTKEDNESSNGNCSGAYVLLSRVYASASRWNDVGIVRKLMSEHGIRKEPGCSSIEINGISHEFFAGDTSHPQTKQIYQQLKVIDDRLRSIGYLPDRSQAPLVDATNDGSKEYSLRLHSERLAIAFGLINLPPQTPIRIFKNLRVCNDCHEVTKLISKVFNTEIIVRDRVRFHHFKDGSCSCLDYW.

Residues 1-40 constitute a chloroplast and mitochondrion transit peptide; the sequence is MVVRSIIVSPPTTITYYHPMSIGLLVHPLSPHIPPASSPS. 10 PPR repeats span residues 82-112, 113-148, 150-184, 185-215, 216-246, 250-280, 288-318, 319-353, 356-390, and 392-422; these read TLFL…IENH, SSFM…GESS, DKHT…GFGG, DVYV…MPER, SLVS…MQRS, DGYT…LLRK, DVLV…MQKR, DLAS…RENV, NSVT…YCIE, and ALEH…MPMK. A type E motif region spans residues 427-510; the sequence is IWRSLLDACC…EPGCSSIEIN (84 aa). Positions 511–541 are type E(+) motif; sequence GISHEFFAGDTSHPQTKQIYQQLKVIDDRLR. Positions 542 to 638 are type DYW motif; the sequence is SIGYLPDRSQ…DGSCSCLDYW (97 aa).

It belongs to the PPR family. PCMP-H subfamily. In terms of assembly, interacts with ORRM1. Interacts with VAR3/OZ1.

The protein resides in the plastid. The protein localises to the chloroplast. It localises to the mitochondrion. Functionally, involved in multiple sites RNA editing events in chloroplasts. Involved in the editing of the site 2 of ndhB (ndhB-2) and site 3 of ndhD (ndhD-3) transcripts, which are two plastid-encoded subunits of the chloroplast NAD(P)H dehydrogenase (NDH) complex. Required for the activity of the NDH complex of the photosynthetic electron transport chain. In Arabidopsis thaliana (Mouse-ear cress), this protein is Pentatricopeptide repeat-containing protein At1g59720, chloroplastic/mitochondrial (PCMP-H51).